The primary structure comprises 550 residues: Glucose-6-phosphate isomerase (550 aa).

The active-site Proton donor is Glu355. Catalysis depends on residues His386 and Lys512.

The protein belongs to the GPI family.

It localises to the cytoplasm. It catalyses the reaction alpha-D-glucose 6-phosphate = beta-D-fructose 6-phosphate. It participates in carbohydrate biosynthesis; gluconeogenesis. It functions in the pathway carbohydrate degradation; glycolysis; D-glyceraldehyde 3-phosphate and glycerone phosphate from D-glucose: step 2/4. Its function is as follows. Catalyzes the reversible isomerization of glucose-6-phosphate to fructose-6-phosphate. The protein is Glucose-6-phosphate isomerase of Rhodococcus opacus (strain B4).